The primary structure comprises 170 residues: Inducible metalloproteinase inhibitor protein (170 aa).

The N-terminal stretch at 1-19 (MKCLLYLCLWCYCVLVSSS) is a signal peptide. 2 N-linked (GlcNAc...) asparagine glycosylation sites follow: Asn-48 and Asn-149.

In terms of processing, cleaved. Five disulfide bonds are present. When artificially cleaved by thermolysin between Asn-56 and Ile-57, the two obtained chains (called heavy and light chains) remain linked. Post-translationally, the N-terminus is blocked.

Inhibits thermolysin, bacillolysin and pseudolysin, B.polymyxa metalloprotease and human MMP1 and MMP3. No activity on trypsin or cysteine protease papain. The polypeptide is Inducible metalloproteinase inhibitor protein (IMPI) (Galleria mellonella (Greater wax moth)).